Reading from the N-terminus, the 704-residue chain is Elongation factor G (704 aa).

Residues 8-291 form the tr-type G domain; that stretch reads DKVRNIGIMA…AVVDYLASPL (284 aa). GTP is bound by residues 17 to 24, 90 to 94, and 144 to 147; these read AHIDAGKT, DTPGH, and NKMD.

It belongs to the TRAFAC class translation factor GTPase superfamily. Classic translation factor GTPase family. EF-G/EF-2 subfamily.

The protein resides in the cytoplasm. Functionally, catalyzes the GTP-dependent ribosomal translocation step during translation elongation. During this step, the ribosome changes from the pre-translocational (PRE) to the post-translocational (POST) state as the newly formed A-site-bound peptidyl-tRNA and P-site-bound deacylated tRNA move to the P and E sites, respectively. Catalyzes the coordinated movement of the two tRNA molecules, the mRNA and conformational changes in the ribosome. The chain is Elongation factor G from Chlorobium phaeovibrioides (strain DSM 265 / 1930) (Prosthecochloris vibrioformis (strain DSM 265)).